Consider the following 363-residue polypeptide: 43 kDa protein (363 aa).

The protein is 43 kDa protein (P43) of Lepidoptera (butterflies and moths).